The chain runs to 337 residues: Ornithine carbamoyltransferase (337 aa).

Residues 57 to 60 (STRT), glutamine 84, arginine 108, and 135 to 138 (HPTQ) each bind carbamoyl phosphate. L-ornithine is bound by residues asparagine 167, aspartate 231, and 235-236 (SM). Carbamoyl phosphate-binding positions include 272–273 (CL) and arginine 317.

It belongs to the aspartate/ornithine carbamoyltransferase superfamily. OTCase family.

It is found in the cytoplasm. It catalyses the reaction carbamoyl phosphate + L-ornithine = L-citrulline + phosphate + H(+). It participates in amino-acid degradation; L-arginine degradation via ADI pathway; carbamoyl phosphate from L-arginine: step 2/2. Its function is as follows. Reversibly catalyzes the transfer of the carbamoyl group from carbamoyl phosphate (CP) to the N(epsilon) atom of ornithine (ORN) to produce L-citrulline. This is Ornithine carbamoyltransferase from Streptococcus equi subsp. equi (strain 4047).